A 396-amino-acid polypeptide reads, in one-letter code: L-lactate dehydrogenase (396 aa).

The region spanning 1–380 is the FMN hydroxy acid dehydrogenase domain; it reads MIISAASDYR…SGDSLVQELG (380 aa). Substrate is bound at residue Tyr24. Residues Ser106 and Gln127 each coordinate FMN. Tyr129 contacts substrate. FMN is bound at residue Thr155. Position 164 (Arg164) interacts with substrate. Residue Lys251 participates in FMN binding. Residue His275 is the Proton acceptor of the active site. A substrate-binding site is contributed by Arg278. An FMN-binding site is contributed by 306 to 330; the sequence is DSGIRNGLDVVRMIALGADTVLLGR.

This sequence belongs to the FMN-dependent alpha-hydroxy acid dehydrogenase family. FMN serves as cofactor.

It localises to the cell inner membrane. The catalysed reaction is (S)-lactate + A = pyruvate + AH2. Functionally, catalyzes the conversion of L-lactate to pyruvate. Is coupled to the respiratory chain. This is L-lactate dehydrogenase from Salmonella choleraesuis (strain SC-B67).